Here is a 225-residue protein sequence, read N- to C-terminus: MKQAGGSAEQKRRAGEAAVAEEVTEGAVVGLGTGSTVAHAIRALGAEASDVSGVATSFESRRRAVDAGVTVTSLEAASVDVAIDGADQVADGVLVKGGGAAHTREKYVAASADRFVVVADPSKESDVVDVPVPVAVVPDAWPVVVDRVEALGGTATLRDAERKDGPVVTDTGSLVVDCDFGAIETPEAVAASLSAVPGVVEHGLFVGMADAVYVGTDDGVRVRDP.

Substrate contacts are provided by residues 33 to 36, 84 to 87, and 96 to 99; these read TGST, DGAD, and KGGG. Catalysis depends on glutamate 105, which acts as the Proton acceptor. Lysine 123 serves as a coordination point for substrate.

The protein belongs to the ribose 5-phosphate isomerase family. Homodimer.

The catalysed reaction is aldehydo-D-ribose 5-phosphate = D-ribulose 5-phosphate. The protein operates within carbohydrate degradation; pentose phosphate pathway; D-ribose 5-phosphate from D-ribulose 5-phosphate (non-oxidative stage): step 1/1. Catalyzes the reversible conversion of ribose-5-phosphate to ribulose 5-phosphate. This is Ribose-5-phosphate isomerase A from Halobacterium salinarum (strain ATCC 29341 / DSM 671 / R1).